A 161-amino-acid polypeptide reads, in one-letter code: MGKQEKDLGTAWEYQGCLIPKDLYYDIENQVWVRVNEDGTVTLGLTDVGQTRAGRLLHIRVKPVGTKVKKGKPVATLESGKWAGPVPALVEGEIVEVNPKVVEDPNYINIDPYGDAWIVKIKPTSEETLKRDLSELAHGEKAHEEMKKHIDEWDIVCMRCV.

In terms of domain architecture, Lipoyl-binding spans 40–122; it reads TVTLGLTDVG…YGDAWIVKIK (83 aa). Position 81 is an N6-lipoyllysine (lysine 81).

This sequence belongs to the GcvH family. The glycine cleavage system is composed of four proteins: P, T, L and H. (R)-lipoate is required as a cofactor.

Its function is as follows. The glycine cleavage system catalyzes the degradation of glycine. The H protein shuttles the methylamine group of glycine from the P protein to the T protein. This chain is Glycine cleavage system H protein 3, found in Aquifex aeolicus (strain VF5).